The chain runs to 1184 residues: Probable phospholipid-transporting ATPase 12 (1184 aa).

Over 1-75 the chain is Cytoplasmic; the sequence is MATVSGRRRK…TTKYTLATFL (75 aa). Residues 76-97 form a helical membrane-spanning segment; that stretch reads PKSLFEQFRRVANFYFLVVGIL. The Extracellular segment spans residues 98-101; the sequence is SFTP. Residues 102–124 traverse the membrane as a helical segment; the sequence is LAPYTAVSAIVPLTFVILATMFK. Residues 125-306 are Cytoplasmic-facing; the sequence is EGVEDWRRKQ…SMIERKMDKI (182 aa). The chain crosses the membrane as a helical span at residues 307–328; it reads IYLMFLMVFSLAFFGSVLFGIW. Over 329–364 the chain is Extracellular; that stretch reads TRDDFQNGVMERWYLKPDDSSIFFDPKRAPMAAIYH. The helical transmembrane segment at 365 to 382 threads the bilayer; sequence FLTALMLNSYFIPISLYV. The Cytoplasmic segment spans residues 383 to 921; that stretch reads SIEIVKVLQS…HGHWCYRRIS (539 aa). Asp430 acts as the 4-aspartylphosphate intermediate in catalysis. Mg(2+) is bound by residues Asp866 and Asp870. Residues 922–941 form a helical membrane-spanning segment; sequence KMICYFFYKNITFGFTLFLY. At 942-955 the chain is on the extracellular side; the sequence is EAYTSFSATPAYND. Residues 956–975 traverse the membrane as a helical segment; the sequence is WYLSLYSVFFTSLPVICLGI. At 976–1005 the chain is on the cytoplasmic side; that stretch reads FDQDVSAPFCLKFPVLYQEGVQNLLFSWRR. A helical membrane pass occupies residues 1006-1028; it reads ILSWMFHGFCSAIIIFFLCKTSL. The Extracellular segment spans residues 1029-1041; that stretch reads ESQAFNHEGKTAG. A helical transmembrane segment spans residues 1042–1064; sequence RDILGGTMYTCVVWVVSLQMVLT. Residues 1065 to 1070 lie on the Cytoplasmic side of the membrane; that stretch reads ISYFTL. A helical membrane pass occupies residues 1071-1091; that stretch reads IQHVVVWGSVVIWYLFLMVYG. The Extracellular portion of the chain corresponds to 1092–1108; that stretch reads SLPIRMSTDAYMVFLEA. The chain crosses the membrane as a helical span at residues 1109-1133; it reads LAPAPSYWITTLFVVLSTMMPYFIF. Over 1134–1184 the chain is Cytoplasmic; it reads SAIQMRFFPMSHGTVQLLRYEDQCSNSGNFEMGRQGSVRPTLVMRSHQPES.

The protein belongs to the cation transport ATPase (P-type) (TC 3.A.3) family. Type IV subfamily.

The protein localises to the membrane. It catalyses the reaction ATP + H2O + phospholipidSide 1 = ADP + phosphate + phospholipidSide 2.. Involved in transport of phospholipids. This Arabidopsis thaliana (Mouse-ear cress) protein is Probable phospholipid-transporting ATPase 12.